Consider the following 174-residue polypeptide: Protein PopB (174 aa).

A disordered region spans residues 1-174; that stretch reads MSHSKIKAGG…EAMKIKDDDD (174 aa). Residues 50 to 65 are compositionally biased toward polar residues; it reads LNKSNLGSDSQTWTPG. Over residues 66-78 the composition is skewed to low complexity; that stretch reads STMVSLKSRSSSS. The span at 79–89 shows a compositional bias: basic and acidic residues; it reads HKPDTGGDTKP. The span at 147-161 shows a compositional bias: low complexity; it reads IALQRAIQRQTQTRQ. Residues 162 to 174 are compositionally biased toward basic and acidic residues; sequence KMQEAMKIKDDDD.

The protein localises to the secreted. Its function is as follows. Probably involved in host-pathogen interactions. This chain is Protein PopB (popB), found in Ralstonia nicotianae (strain ATCC BAA-1114 / GMI1000) (Ralstonia solanacearum).